Consider the following 157-residue polypeptide: MRIGIGIDVHPFAEGRKLIVGGVDIPSPKGLEGHSDADVLLHAVSDALLGAAALGDIGLHFPNTSAEYKDIDSMILLKHVGRLLTKNGYRTVNVDAMLLLEAPKIAPYVADMRRNIARCLDIDTSLVSVKATTNEKLGYIGREEGAAAHAVCIIETL.

Residues aspartate 8 and histidine 10 each coordinate a divalent metal cation. 4-CDP-2-C-methyl-D-erythritol 2-phosphate contacts are provided by residues 8–10 and 34–35; these read DVH and HS. Histidine 42 provides a ligand contact to a divalent metal cation. Residues 56–58, 132–135, and arginine 142 contribute to the 4-CDP-2-C-methyl-D-erythritol 2-phosphate site; these read DIG and TTNE.

Belongs to the IspF family. In terms of assembly, homotrimer. The cofactor is a divalent metal cation.

The enzyme catalyses 4-CDP-2-C-methyl-D-erythritol 2-phosphate = 2-C-methyl-D-erythritol 2,4-cyclic diphosphate + CMP. The protein operates within isoprenoid biosynthesis; isopentenyl diphosphate biosynthesis via DXP pathway; isopentenyl diphosphate from 1-deoxy-D-xylulose 5-phosphate: step 4/6. Involved in the biosynthesis of isopentenyl diphosphate (IPP) and dimethylallyl diphosphate (DMAPP), two major building blocks of isoprenoid compounds. Catalyzes the conversion of 4-diphosphocytidyl-2-C-methyl-D-erythritol 2-phosphate (CDP-ME2P) to 2-C-methyl-D-erythritol 2,4-cyclodiphosphate (ME-CPP) with a corresponding release of cytidine 5-monophosphate (CMP). The chain is 2-C-methyl-D-erythritol 2,4-cyclodiphosphate synthase from Chlorobium luteolum (strain DSM 273 / BCRC 81028 / 2530) (Pelodictyon luteolum).